We begin with the raw amino-acid sequence, 461 residues long: LL-diaminopimelate aminotransferase, chloroplastic (461 aa).

The transit peptide at 1–45 (MSSTHQLVSSMISSSSSTFLAPSNFNLRTRNACLPMAKRVNTCKC) directs the protein to the chloroplast. The substrate site is built by Tyr-72 and Gly-99. Pyridoxal 5'-phosphate is bound by residues Tyr-129, 163 to 164 (AK), Tyr-187, Asn-244, Tyr-275, and 302 to 304 (SFS). Substrate contacts are provided by Lys-164, Tyr-187, and Asn-244. Lys-305 is modified (N6-(pyridoxal phosphate)lysine). 2 residues coordinate pyridoxal 5'-phosphate: Arg-313 and Asn-344. Residues Asn-344 and Arg-439 each coordinate substrate.

Belongs to the class-I pyridoxal-phosphate-dependent aminotransferase family. LL-diaminopimelate aminotransferase subfamily. Homodimer. Pyridoxal 5'-phosphate is required as a cofactor. As to expression, highly expressed in seedlings, roots, stems, flowers and leaves. Lower expression in siliques.

It is found in the plastid. Its subcellular location is the chloroplast. It catalyses the reaction (2S,6S)-2,6-diaminopimelate + 2-oxoglutarate = (S)-2,3,4,5-tetrahydrodipicolinate + L-glutamate + H2O + H(+). Its pathway is amino-acid biosynthesis; L-lysine biosynthesis via DAP pathway; LL-2,6-diaminopimelate from (S)-tetrahydrodipicolinate (aminotransferase route): step 1/1. Functionally, required for lysine biosynthesis. Catalyzes the direct conversion of tetrahydrodipicolinate to LL-diaminopimelate, a reaction that requires three enzymes in E.coli. Not active with meso-diaminopimelate, lysine or ornithine as substrates. The chain is LL-diaminopimelate aminotransferase, chloroplastic (DAP) from Arabidopsis thaliana (Mouse-ear cress).